Reading from the N-terminus, the 604-residue chain is MLLKELSSLASPLSQPQVEKLKQLTAELNAVQLAWVSGYLAATANAPGNLAQLAPVSDAQAAQTVTILYGSQTGNGRGIAKALAEKAKAQGYSVNLASMGEYNVRQLKQETLLLLVVSTHGEGEAPDDAIELHKFLASKRAPQLSNLHYSVLALGDSSYEFFCQTGKDFDARLSALGAKALLPLVECDVDYEAAAGQWHADVLTAVKPLIQTTANVVALNDTSSALAASESEFTKQNPYSAEVLVSQKITGRGSDRDVRHVEIDLGESGLCYEVGDALGVWFSNNETLVDEILAGLGLAADTKVTVGNESISLKQALLEKKELTQLYPGLVKAWAELSASPELLALSGDKEQVRQFILHHQFADLVANYQLKADANLDANKLVELLRPLTPRLYSIASSQSEVDTEVHLTVALVEDEHQGQARFGGASHFLASAEEGAEVKVYVEPNKHFRLPEDPQTPVIMIGPGTGVAPFRAFMQERVAQGAEGDSWLFFGNPHFEQDFLYQTEWQQYLKNGDLTRIDVAFSRDQAHKIYVQHRIKEQGQTLWQWLQNGAHLYICGDAERMAKDVHQALLAIAVEFGGLSSEAAEEYFETLRSHKRYQKDVY.

One can recognise a Flavodoxin-like domain in the interval 65-203; that stretch reads VTILYGSQTG…AAGQWHADVL (139 aa). Residues 71–76, 118–121, and 154–163 contribute to the FMN site; these read SQTGNG, STHG, and LGDSSYEFFC. An FAD-binding FR-type domain is found at 236 to 453; that stretch reads QNPYSAEVLV…VEPNKHFRLP (218 aa). FAD is bound by residues threonine 324, leucine 358, 392–395, 410–412, and 425–428; these read RLYS, TVA, and GGAS. Residues 524–525, 530–534, and aspartate 566 each bind NADP(+); these read SR and KIYVQ. Residue tyrosine 604 participates in FAD binding.

The protein belongs to the NADPH-dependent sulphite reductase flavoprotein subunit CysJ family. It in the N-terminal section; belongs to the flavodoxin family. This sequence in the C-terminal section; belongs to the flavoprotein pyridine nucleotide cytochrome reductase family. In terms of assembly, alpha(8)-beta(8). The alpha component is a flavoprotein, the beta component is a hemoprotein. It depends on FAD as a cofactor. FMN is required as a cofactor.

It catalyses the reaction hydrogen sulfide + 3 NADP(+) + 3 H2O = sulfite + 3 NADPH + 4 H(+). It functions in the pathway sulfur metabolism; hydrogen sulfide biosynthesis; hydrogen sulfide from sulfite (NADPH route): step 1/1. In terms of biological role, component of the sulfite reductase complex that catalyzes the 6-electron reduction of sulfite to sulfide. This is one of several activities required for the biosynthesis of L-cysteine from sulfate. The flavoprotein component catalyzes the electron flow from NADPH -&gt; FAD -&gt; FMN to the hemoprotein component. This is Sulfite reductase [NADPH] flavoprotein alpha-component from Shewanella sp. (strain MR-7).